Reading from the N-terminus, the 91-residue chain is Protein transport protein Sec61 subunit beta (91 aa).

The interval 1-45 (MSTSAQVPGGPAAQMKRRNNAQRQEAKASQRPTSTRSVGAGGSSS) is disordered. The Cytoplasmic segment spans residues 1 to 62 (MSTSAQVPGG…DESQGLKVDP (62 aa)). A compositionally biased stretch (polar residues) spans 30-45 (QRPTSTRSVGAGGSSS). The helical transmembrane segment at 63-83 (VVVMVLSLGFIFSVVALHILA) threads the bilayer.

This sequence belongs to the SEC61-beta family. In terms of assembly, heterotrimeric complex composed of SEC61, SEB1 and SSS1.

The protein localises to the endoplasmic reticulum membrane. In terms of biological role, necessary for protein translocation in the endoplasmic reticulum. This is Protein transport protein Sec61 subunit beta (SBH1) from Yarrowia lipolytica (strain CLIB 122 / E 150) (Yeast).